Consider the following 213-residue polypeptide: Protein GrpE (213 aa).

Residues 1–23 (MSDEKKPEAETSESLQKREEKLA) show a composition bias toward basic and acidic residues. The disordered stretch occupies residues 1–43 (MSDEKKPEAETSESLQKREEKLAETLASEPAAQGEAEDAAAAG). Residues 29-43 (EPAAQGEAEDAAAAG) show a composition bias toward low complexity.

The protein belongs to the GrpE family. Homodimer.

The protein localises to the cytoplasm. Its function is as follows. Participates actively in the response to hyperosmotic and heat shock by preventing the aggregation of stress-denatured proteins, in association with DnaK and GrpE. It is the nucleotide exchange factor for DnaK and may function as a thermosensor. Unfolded proteins bind initially to DnaJ; upon interaction with the DnaJ-bound protein, DnaK hydrolyzes its bound ATP, resulting in the formation of a stable complex. GrpE releases ADP from DnaK; ATP binding to DnaK triggers the release of the substrate protein, thus completing the reaction cycle. Several rounds of ATP-dependent interactions between DnaJ, DnaK and GrpE are required for fully efficient folding. This is Protein GrpE from Parvibaculum lavamentivorans (strain DS-1 / DSM 13023 / NCIMB 13966).